The chain runs to 256 residues: tRNA (guanine-N(7)-)-methyltransferase (256 aa).

A compositionally biased stretch (polar residues) spans 1–11 (MHPQDASTEQT). The disordered stretch occupies residues 1-35 (MHPQDASTEQTPVDDDQVESSQPVHAPEDVAHPRR). S-adenosyl-L-methionine is bound by residues glutamate 85, glutamate 110, aspartate 137, and aspartate 160. Aspartate 160 is a catalytic residue. Lysine 164 contributes to the substrate binding site. Residues 166–171 (RHNKRR) form an interaction with RNA region. Substrate-binding positions include aspartate 196 and 234–237 (TKFE).

The protein belongs to the class I-like SAM-binding methyltransferase superfamily. TrmB family.

The enzyme catalyses guanosine(46) in tRNA + S-adenosyl-L-methionine = N(7)-methylguanosine(46) in tRNA + S-adenosyl-L-homocysteine. Its pathway is tRNA modification; N(7)-methylguanine-tRNA biosynthesis. Functionally, catalyzes the formation of N(7)-methylguanine at position 46 (m7G46) in tRNA. In Cupriavidus pinatubonensis (strain JMP 134 / LMG 1197) (Cupriavidus necator (strain JMP 134)), this protein is tRNA (guanine-N(7)-)-methyltransferase.